We begin with the raw amino-acid sequence, 66 residues long: Putative transmembrane protein ORF66 (66 aa).

Topologically, residues 1–6 are cytoplasmic; the sequence is MSDVDD. The chain crosses the membrane as a helical span at residues 7–27; the sequence is TIVDSIAIVGAILIGIFLIVV. The Extracellular segment spans residues 28–39; sequence SVSNTSLFNNTE. Residues 40–60 traverse the membrane as a helical segment; sequence YDSMINSVLVIISSVIAYTLG. Topologically, residues 61 to 66 are cytoplasmic; that stretch reads KRRSKS.

The protein localises to the host membrane. This chain is Putative transmembrane protein ORF66, found in Acidianus filamentous virus 2 (isolate Italy/Pozzuoli) (AFV-2).